The primary structure comprises 80 residues: Mu-conotoxin BuIIIC (80 aa).

An N-terminal signal peptide occupies residues 1–22 (MMSKLGVLLTICLLLFPLFALP). Residues 23-51 (QDGDQPADRPAERMQDDLSSEQHPLFEKR) constitute a propeptide that is removed on maturation. 3 disulfides stabilise this stretch: cysteine 56–cysteine 70, cysteine 57–cysteine 76, and cysteine 66–cysteine 77. Residue cysteine 77 is modified to Cysteine amide.

The protein belongs to the conotoxin M superfamily. Expressed by the venom duct.

It is found in the secreted. Its function is as follows. Mu-conotoxins block voltage-gated sodium channels. Extremely potent inhibitor of Nav1.4/SCN4A (96% inhibition at 1 uM). The inhibition is very slowly reversible. The protein is Mu-conotoxin BuIIIC of Conus bullatus (Bubble cone).